The sequence spans 361 residues: Hydroxycarboxylate dehydrogenase B (361 aa).

Residues His48, 122-124 (GRI), 178-182 (LLDYA), His234, Asn270, and 313-316 (GEWE) each bind NAD(+).

Belongs to the LDH2/MDH2 oxidoreductase family.

The catalysed reaction is 2-hydroxyglutarate + NADP(+) = 2-oxoglutarate + NADPH + H(+). It catalyses the reaction 2-hydroxyglutarate + NAD(+) = 2-oxoglutarate + NADH + H(+). The enzyme catalyses 3-phenyllactate + NADP(+) = 3-phenylpyruvate + NADPH + H(+). It carries out the reaction 3-phenyllactate + NAD(+) = 3-phenylpyruvate + NADH + H(+). The catalysed reaction is (2R)-2-hydroxy-3-(4-hydroxyphenyl)propanoate + NAD(+) = 3-(4-hydroxyphenyl)pyruvate + NADH + H(+). It catalyses the reaction (2R)-2-hydroxy-3-(4-hydroxyphenyl)propanoate + NADP(+) = 3-(4-hydroxyphenyl)pyruvate + NADPH + H(+). The enzyme catalyses (2R)-3-(3,4-dihydroxyphenyl)lactate + NADP(+) = 3-(3,4-dihydroxyphenyl)pyruvate + NADPH + H(+). It carries out the reaction (2R)-3-(3,4-dihydroxyphenyl)lactate + NAD(+) = 3-(3,4-dihydroxyphenyl)pyruvate + NADH + H(+). Its function is as follows. Catalyzes the NAD(P)H-dependent reduction of 2-oxoglutarate, phenylpyruvate and (4-hydroxyphenyl)pyruvate, leading to the respective 2-hydroxycarboxylate in vitro. Shows a preference for NADPH over NADH as a redox partner. Do not catalyze the reverse reactions. The sequence is that of Hydroxycarboxylate dehydrogenase B from Escherichia coli (strain K12).